The following is a 411-amino-acid chain: Arginine deiminase (411 aa).

Catalysis depends on C401, which acts as the Amidino-cysteine intermediate.

This sequence belongs to the arginine deiminase family.

It is found in the cytoplasm. The enzyme catalyses L-arginine + H2O = L-citrulline + NH4(+). It participates in amino-acid degradation; L-arginine degradation via ADI pathway; carbamoyl phosphate from L-arginine: step 1/2. In Staphylococcus haemolyticus (strain JCSC1435), this protein is Arginine deiminase.